Reading from the N-terminus, the 215-residue chain is Peroxiredoxin 1 (215 aa).

A Thioredoxin domain is found at 1–157 (MKLYQKFPET…LLRITKAALV (157 aa)). The active-site Cysteine sulfenic acid (-SOH) intermediate is C45. R120 contacts substrate.

It belongs to the peroxiredoxin family. Prx6 subfamily. Homodecamer. Pentamer of dimers that assemble into a ring structure.

The protein localises to the cytoplasm. The enzyme catalyses a hydroperoxide + [thioredoxin]-dithiol = an alcohol + [thioredoxin]-disulfide + H2O. Its function is as follows. Thiol-specific peroxidase that catalyzes the reduction of hydrogen peroxide and organic hydroperoxides to water and alcohols, respectively. Plays a role in cell protection against oxidative stress by detoxifying peroxides. The sequence is that of Peroxiredoxin 1 from Sulfuracidifex metallicus (Sulfolobus metallicus).